The following is a 466-amino-acid chain: Zinc finger and SCAN domain-containing protein 26 (466 aa).

Lys-21 is covalently cross-linked (Glycyl lysine isopeptide (Lys-Gly) (interchain with G-Cter in SUMO2)). The 83-residue stretch at 42–124 (CKQFRQLRYE…GILEDLQLDR (83 aa)) folds into the SCAN box domain. Basic and acidic residues-rich tracts occupy residues 124 to 135 (RGKAGEQKDSAQ) and 163 to 173 (KPEERGKETRS). Residues 124–182 (RGKAGEQKDSAQRSRPTVLVGEPAPRREAREQPGCALPQKPEERGKETRSENGNLIAGT) are disordered. Residues 220 to 242 (SQCLETKERLVQNSGLIEHDRAH) form a C2H2-type 1; degenerate zinc finger. 7 consecutive C2H2-type zinc fingers follow at residues 270–292 (HPCQ…QKIH), 298–320 (YQCK…LRIH), 326–348 (YLCI…QKIH), 354–376 (RECK…QRVH), 382–404 (HHCN…HRIH), 410–432 (FKCN…VRIH), and 438–460 (YKCS…QRHH).

It localises to the nucleus. Functionally, may be involved in transcriptional regulation. The polypeptide is Zinc finger and SCAN domain-containing protein 26 (Zscan26) (Mus musculus (Mouse)).